The chain runs to 320 residues: Undecaprenyl-diphosphatase (320 aa).

8 helical membrane passes run 9-29 (FVLV…LEVF), 82-102 (GVAF…WYFW), 130-150 (LGII…KKLI), 161-181 (LGAI…GEKL), 191-211 (LTMQ…IPGV), 236-256 (FLLG…DVFA), 265-285 (LPLI…IAGL), and 296-316 (VFIW…SAGI).

Belongs to the UppP family.

It is found in the cell inner membrane. It carries out the reaction di-trans,octa-cis-undecaprenyl diphosphate + H2O = di-trans,octa-cis-undecaprenyl phosphate + phosphate + H(+). In terms of biological role, catalyzes the dephosphorylation of undecaprenyl diphosphate (UPP). Confers resistance to bacitracin. In Trichormus variabilis (strain ATCC 29413 / PCC 7937) (Anabaena variabilis), this protein is Undecaprenyl-diphosphatase.